The chain runs to 2460 residues: MVVPNEPIAVIGTGCRFPGGASSPSKLWNLLHHPYDLTQKVPSSRFNIKAFYHPNGEHHGTTNATKSYFLNEDPTTFDAPFFNINPREAEALDPQQRLLLETVYEALEAAGLSIEEMQGTSTAVYVGLMCADYFDVLMRDIEDIPQYLATGTARSIMSNRISYFFDWKGPSMTIDTACSSSLVAVHNAISTLRSGQSRTAIAAGANLIFGPEMYIGESNLHMLSPTGRSQMWDSRADGYARGEGTAAIVLKTLKNALEDGDDIEYIIRETGVNSDGKSKGITMPLAASQADLIRQTYARAGLDCTKPSERCQYFEAHGTGTPAGDPVEAEAISSAFFPQRSDILNSEPLHVGSIKTVIGHLEGAAGLAGIIKAGLALKEKTIPPNLHFQSLNSAIEPFYGNLNVPTAPLPWPAVEGPLRASVNSFGFGGTNAHAILESYEVCTPTPSLESTALIPFTISAISEDCLIQNITNFSDYIEEHEGVNLIDLGYSLLGRSNFPTKATFVASNTEDLLDQLEKVIIAKEENPNLAIGIRSTNVNDKSSRKILGVFTGQGAQWPAMGKMLIANIPSFSQTIDSLEKSLRELPDAPKWSLKDEIVASVGKSSIEKAEFSQPLCTALQIALVDLLKLIGVTFSAVVGHSSGEIGAAYAAGRLTAGDAIRIAYYRGLHAHLAKGKGGEEGSMMAAGLSFDEALEFCAGEEYQGKISIAASNAPKTVTLSGNKDAIEKAKSTLDDRGVFARVLKVDTAYHSDHMLPCSEPYTRSLAACKISPKPSLLDCTWISSVHLKNMSSESSELETKYWVDNLVSPVRFFEAVSIAAKEFGSFDAAVEVGPHPALKGPVAQTFKHAVNAVVPYTGVLSRGDNDSIAFANALGFLLNYINGKRISFKKYLDAISGGVVTTPKLLKGLPTYSWDHSRTFWFESRISRNYRNRVDPPHELLGVRCADDTDMEYRWRNIFKLDELPWVSGHKFQRQTLVPAAFYCSMALESSKVLANGKPIRLVELHQVDIERAINLEENNAAVEVMFALKPRSSSASGSDEIVCADFWCTAAPSGKPMSMIFSGRIKMTLGTPSPDAMSIRSPVRPVLGPLNVDRFYDSLANVGLEFTGIFRGIEKGQRRMHISSLEGRRCLSDTGLLVHPAFLDMTLHATLAAFASPGDERFWTPYLPRRIAKMSFNIALCEAAFEKETALAGMDGYITEVTPTTANDAATYVGDVDVFDPLTNEIEIQIEGLQMQSFTAARPSQDRQLYLETLWAADISGGIISEVDIEDDDPKALHLIDLGERLSYAYMRHLMSEIKPENIPDHHRPLFNWINHVTDLVSKGTHPSIKPEWNNDDLQELITMASIYPECVDLELMQAVGNNLPDVVRGTTTMLEHMLPNGLLDRLYTEGIGMATSNKFVTAAMKKIGHRYPKMRVLEIGAGTGGATKGIFTGIGDAFAHYTFTDISTGFFMKAREVFSDYANRMTFSLLNCEKDPLEQGYEAHSFDVIVASNVLHATEFLEKTMRNVRTLLKPGGYLCLLECTGHLERTGFLMAGLPGWWLGGADGRPYRPTISPPEWDSVLKKTGFSGVDAIVNDFKDKSRYTVSVILSQALDDDVQKLREPLQYHPESTGKDLIVIGGSSIATQLLVETIKQDIPSWETRKTIVLATWEEASKLTIPFGTTILSVADLDEPIFKSMNAERLKGIQTVINSAESVLWVTTGCKADEPYANMAIGLGRSIISEMPHLNLQFLDVDLKGNAAKVIGETLVRLEVATGLLDSRKENLLWSIEPEMIYENGQLYLPRVKPIKKLNDVLNSTRRVITEEVLLASKKVTITPPTVGNRFNLEVQEVVMDHLDSENELEISVSFSSLYTVNIDGNFLYIILGKTKSGSSILALSASNQSLITVPKDWAIPASQATPEYLECAMAYLLAKQILNKGSSSVLLHEPSFALSQAVESIAKADGKSISNIASTKSTTSIQNCIKVHPTLSKRAIRDLLPASIQSFVDISGTGKHVKDALTKLTSIIEIDGFLGVTPAKSSSSVDPSTVLADVVAYADSTKTKDIEGRFLLNAGSLKHGHVSSFSPLSVVDWTSNTTLTVDVKPFSQNQIFDKNKSYLLAGLTGDLGQSICRWMVEAGARYIIIGSRSVKSGTPWQQELQRMGATVLVYTIDFTDKEAVTRLREEAIKTMPPIAGVMNGCMVLDDKPFSDMPFETLERVIRPKVLSTINIDAVFGLELDFFVLFSSLAAVNGIPGQSNYAAANMYMASLAEQRRKRGGVASVIHIGMILGVGYVERSGRFTESALRSYNYLTIPEHEFLQVLSEAVQSGHPASNRCPEIIIGMVAPLTGEERDKPRWHANPRFAFVMNDFTNEESDSQGEVEVPTKEQLAKAQTKDEVLGVMQKCFAKQLELILQADSGSIDESAPLTQLGIDSLIAVEIRSWFLKEAGVSLPVLKILGGAAAKDLCELACEEYKVTE.

The region spanning Asn5–Ser438 is the Ketosynthase family 3 (KS3) domain. Active-site for beta-ketoacyl synthase activity residues include Cys178, His317, and His360. Residues Val549–Asp864 form a malonyl-CoA:ACP transacylase (MAT) domain region. Residues His938–Pro1073 form an N-terminal hotdog fold region. The dehydratase (DH) domain stretch occupies residues His938–Pro1244. Positions His938–Ser1245 constitute a PKS/mFAS DH domain. The active-site Proton acceptor; for dehydratase activity is the His970. Residues Leu1088–Ser1245 are C-terminal hotdog fold. Asp1145 acts as the Proton donor; for dehydratase activity in catalysis. The segment at Asn1399–Tyr1586 is methyltransferase (MT) domain. Residues Ser2098–His2266 are ketoreductase (KR) domain. The region spanning Asp2378–Tyr2456 is the Carrier domain. Residue Ser2416 is modified to O-(pantetheine 4'-phosphoryl)serine.

The protein operates within polyketide biosynthesis. In terms of biological role, reducing polyketide synthase; part of the gene cluster A that mediates the biosynthesis of botcinic acid and its botcinin derivatives, acetate-derived polyketides that contribute to virulence when combined with the sesquiterpene botrydial. Botcinic acid and its derivatives have been shown to induce chlorosis and necrosis during host plant infection, but also have antifungal activities. Two polyketide synthases, BOA6 and BOA9, are involved in the biosynthesis of botcinins. BOA6 mediates the formation of the per-methylated tetraketide core by condensation of four units of malonyl-CoA with one unit of acetyl-CoA, which would be methylated in activated methylene groups to yield a bicyclic acid intermediate that could then either be converted to botrylactone derivatives or lose the starter acetate unit through a retro-Claisen type C-C bond cleavage to yield botcinin derivatives. The second polyketide synthase, BOA9, is probably required for the biosynthesis of the tetraketide side chain of botcinins. The methyltransferase (MT) domain within BOA6 is probably responsible for the incorporation of four methyl groups. The trans-enoyl reductase BOA5 might take over the enoyl reductase function of BOA6 that misses an ER domain. The monooxygenases BOA2, BOA3 and BOA4 might be involved in further hydroxylations at C4, C5 and C8, whereas BOA7, close to BOA9, could potentially be involved in the hydroxylation at C4 in the side chain of botcinins. The chain is Reducing polyketide synthase BOA6 from Botryotinia fuckeliana (strain B05.10) (Noble rot fungus).